A 168-amino-acid polypeptide reads, in one-letter code: 6-pyruvoyl tetrahydrobiopterin synthase (168 aa).

Position 19 (His19) interacts with Zn(2+). Cys38 functions as the Proton acceptor in the catalytic mechanism. Residues His44 and His46 each contribute to the Zn(2+) site. Catalysis depends on charge relay system residues His85 and Glu130. Ser159 is modified (phosphoserine). At Thr161 the chain carries Phosphothreonine. 3 positions are modified to phosphoserine: Ser164, Ser165, and Ser167.

Belongs to the PTPS family. Homohexamer formed of two homotrimers in a head to head fashion. Zn(2+) is required as a cofactor.

The enzyme catalyses 7,8-dihydroneopterin 3'-triphosphate = 6-pyruvoyl-5,6,7,8-tetrahydropterin + triphosphate + H(+). It functions in the pathway cofactor biosynthesis; tetrahydrobiopterin biosynthesis; tetrahydrobiopterin from 7,8-dihydroneopterin triphosphate: step 1/3. Functionally, required for pigment and biopterin synthesis. This Drosophila melanogaster (Fruit fly) protein is 6-pyruvoyl tetrahydrobiopterin synthase (pr).